Reading from the N-terminus, the 287-residue chain is MHLARTLPTLQQAVHQLRHAGKRIAFVPTMGALHEGHQSLVRAAIAQDYAVVTSVFVNPTQFGPSEDLARYPRDEKGDIAILERTGCSIAWLPDVDTMYPPGDATGFVMGGPALGWEGARRPGHFNGVAQVVAKLFGQVRPDAAFFGEKDWQQLQVIRRLTADLLLPVAIHGVPTQREEDGLAMSSRNRFLSPEERAIAPLLFRTLLQAGHALSSSPDAEEICKNAIAALNGQGFDVDYFALIEGSSLSSIAILPEGDDWRLITAARLGSVRLLDNLGRAELARFRA.

Position 30-37 (methionine 30–histidine 37) interacts with ATP. The Proton donor role is filled by histidine 37. Glutamine 61 contributes to the (R)-pantoate binding site. Glutamine 61 provides a ligand contact to beta-alanine. Glycine 147 to aspartate 150 provides a ligand contact to ATP. (R)-pantoate is bound at residue glutamine 153. An ATP-binding site is contributed by methionine 184–arginine 187.

This sequence belongs to the pantothenate synthetase family. As to quaternary structure, homodimer.

Its subcellular location is the cytoplasm. The catalysed reaction is (R)-pantoate + beta-alanine + ATP = (R)-pantothenate + AMP + diphosphate + H(+). The protein operates within cofactor biosynthesis; (R)-pantothenate biosynthesis; (R)-pantothenate from (R)-pantoate and beta-alanine: step 1/1. In terms of biological role, catalyzes the condensation of pantoate with beta-alanine in an ATP-dependent reaction via a pantoyl-adenylate intermediate. The chain is Pantothenate synthetase from Granulibacter bethesdensis (strain ATCC BAA-1260 / CGDNIH1).